The sequence spans 523 residues: Endoglucanase 19 (523 aa).

The N-terminal stretch at 1 to 52 is a signal peptide; it reads MCSWSLSSHTLTSPVRQAAMEPKSSSCGGAGIRLRLLVVLHLLLLVPSSAMA. D107 acts as the Nucleophile in catalysis. N279 carries N-linked (GlcNAc...) asparagine glycosylation. Active-site residues include H442, D493, and E502.

Belongs to the glycosyl hydrolase 9 (cellulase E) family.

The protein localises to the secreted. The enzyme catalyses Endohydrolysis of (1-&gt;4)-beta-D-glucosidic linkages in cellulose, lichenin and cereal beta-D-glucans.. This Oryza sativa subsp. japonica (Rice) protein is Endoglucanase 19.